A 329-amino-acid polypeptide reads, in one-letter code: 4-hydroxythreonine-4-phosphate dehydrogenase (329 aa).

Substrate is bound by residues His136 and Thr137. Residues His166, His211, and His266 each coordinate a divalent metal cation. The substrate site is built by Lys274, Asn283, and Arg292.

This sequence belongs to the PdxA family. In terms of assembly, homodimer. It depends on Zn(2+) as a cofactor. Mg(2+) is required as a cofactor. The cofactor is Co(2+).

The protein localises to the cytoplasm. The catalysed reaction is 4-(phosphooxy)-L-threonine + NAD(+) = 3-amino-2-oxopropyl phosphate + CO2 + NADH. It participates in cofactor biosynthesis; pyridoxine 5'-phosphate biosynthesis; pyridoxine 5'-phosphate from D-erythrose 4-phosphate: step 4/5. Functionally, catalyzes the NAD(P)-dependent oxidation of 4-(phosphooxy)-L-threonine (HTP) into 2-amino-3-oxo-4-(phosphooxy)butyric acid which spontaneously decarboxylates to form 3-amino-2-oxopropyl phosphate (AHAP). The polypeptide is 4-hydroxythreonine-4-phosphate dehydrogenase (Escherichia coli (strain K12 / MC4100 / BW2952)).